The chain runs to 481 residues: uncharacterized protein (481 aa).

A helical transmembrane segment spans residues 18-38; it reads FMIVTAIAVAIFVVITGVVIF.

The protein localises to the cell inner membrane. Functionally, involved in DNA conjugation in the recipient strain. This is an uncharacterized protein from Mycolicibacterium smegmatis (strain MKD8) (Mycobacterium smegmatis).